Here is a 284-residue protein sequence, read N- to C-terminus: MEMO1 family protein Saci_0089 (284 aa).

The protein belongs to the MEMO1 family.

This Sulfolobus acidocaldarius (strain ATCC 33909 / DSM 639 / JCM 8929 / NBRC 15157 / NCIMB 11770) protein is MEMO1 family protein Saci_0089.